Reading from the N-terminus, the 434-residue chain is RNA-binding protein SRO9 (434 aa).

The segment covering 1-13 has biased composition (low complexity); that stretch reads MSAETAAANTATA. Positions 1–243 are disordered; it reads MSAETAAANT…FHHNQQHPQQ (243 aa). A compositionally biased stretch (polar residues) spans 26 to 41; that stretch reads SKQVNLTPAPLPTSSP. Ser55 is modified (phosphoserine). Residues 93–124 are compositionally biased toward low complexity; sequence KRSGSKNGASNGNSNKSKNNKTAASSTSSSNA. Positions 125 to 140 are enriched in basic residues; it reads NRKKKHHQHNAKKQQQ. Ser148 bears the Phosphoserine mark. Lys156 participates in a covalent cross-link: Glycyl lysine isopeptide (Lys-Gly) (interchain with G-Cter in ubiquitin). Residues 158–167 show a composition bias toward polar residues; sequence ATSQENGQST. Over residues 173-195 the composition is skewed to basic residues; that stretch reads PHHRNHHHSHHHNSNGPQRRKFH. A compositionally biased stretch (polar residues) spans 196-208; it reads NSNNAGMPQNQGF. Low complexity predominate over residues 218 to 227; the sequence is RNARNNNNNR. The segment covering 228-238 has biased composition (basic residues); that stretch reads SKYHNHFHHNQ. The 97-residue stretch at 255 to 351 folds into the HTH La-type RNA-binding domain; it reads VQPVLMAINN…KEGDNVTGEA (97 aa). Glycyl lysine isopeptide (Lys-Gly) (interchain with G-Cter in ubiquitin) cross-links involve residues Lys301, Lys342, and Lys352. The disordered stretch occupies residues 396–434; the sequence is SLPPVPQQEEESSTELASQEQETKEDSAPVAAGESESSL. A Phosphoserine modification is found at Ser422.

Interacts with HAP1. Component of the HMC including HAP1, SRO9 and YDJ1.

The protein resides in the cytoplasm. Its function is as follows. May overlap in function with tropomyosin and may be involved in organization of actin filaments. Acts as a multicopy suppressor of RHO3 mutation. RNA-binding protein which may modulate mRNA translation. Involved in heme regulation of HAP1, as a component of the high-molecular-weight complex (HMC). The polypeptide is RNA-binding protein SRO9 (SRO9) (Saccharomyces cerevisiae (strain ATCC 204508 / S288c) (Baker's yeast)).